The following is a 62-amino-acid chain: MIGGLGWGELLIILIIVIAIFGAGKLAGLGGALGSSIREFRKAVKGDDEPRSDAKTEGETKV.

The chain crosses the membrane as a helical span at residues 10 to 32; that stretch reads LLIILIIVIAIFGAGKLAGLGGA.

This sequence belongs to the TatA/E family. In terms of assembly, forms a complex with TatC.

Its subcellular location is the cell membrane. In terms of biological role, part of the twin-arginine translocation (Tat) system that transports large folded proteins containing a characteristic twin-arginine motif in their signal peptide across membranes. TatA could form the protein-conducting channel of the Tat system. The chain is Sec-independent protein translocase protein TatA from Chloroflexus aurantiacus (strain ATCC 29366 / DSM 635 / J-10-fl).